We begin with the raw amino-acid sequence, 111 residues long: MAPRTPLALFVSLNLLFFTYTSATTGTCPKNSIEIGTCVTVLNLVDLTLGNPPVKPCCSLIQGLADLEAAVCLCTAVKASILGIVNINLPINLSVLLNVCSRNAPKSFQCA.

Residues 1–23 (MAPRTPLALFVSLNLLFFTYTSA) form the signal peptide. Intrachain disulfides connect C28–C58, C38–C57, and C74–C110.

It belongs to the plant LTP family. PEARLI1 subfamily.

The protein localises to the secreted. The polypeptide is Putative lipid-binding protein AIR1 (AIR1) (Arabidopsis thaliana (Mouse-ear cress)).